The primary structure comprises 272 residues: Troponin T, fast skeletal muscle (272 aa).

Acidic residues predominate over residues 1-50 (MSDEETEQVEEQYEEEEEAQEEEVQEEAPEPEEVQEDAVAEEEREEDEEE). Positions 1–75 (MSDEETEQVE…EKVDFDDIQK (75 aa)) are disordered. Serine 2 bears the N-acetylserine mark. Position 2 is a phosphoserine (serine 2). Over residues 63–75 (PEGEKVDFDDIQK) the composition is skewed to basic and acidic residues. Serine 91 carries the post-translational modification Phosphoserine. Over residues 114 to 156 (RAERAEQQRIRAEKEREPQNRLAEEKARREEEDAKRRAEDDMK) the composition is skewed to basic and acidic residues. The interval 114 to 193 (RAERAEQQRI…TAREMKKKIL (80 aa)) is disordered. Phosphoserine occurs at positions 162, 169, and 170. The span at 184-193 (TAREMKKKIL) shows a compositional bias: basic and acidic residues. Serine 206 is modified (phosphoserine). Phosphotyrosine is present on tyrosine 222. Residues 248-272 (RIDQAQKHSKKAGATAKGKVGGRWK) form a disordered region.

The protein belongs to the troponin T family. Expressed predominantly in skeletal muscle.

Functionally, troponin T is the tropomyosin-binding subunit of troponin, the thin filament regulatory complex which confers calcium-sensitivity to striated muscle actomyosin ATPase activity. The protein is Troponin T, fast skeletal muscle (Tnnt3) of Mus musculus (Mouse).